Consider the following 131-residue polypeptide: Small ribosomal subunit protein uS8 (131 aa).

This sequence belongs to the universal ribosomal protein uS8 family. In terms of assembly, part of the 30S ribosomal subunit. Contacts proteins S5 and S12.

In terms of biological role, one of the primary rRNA binding proteins, it binds directly to 16S rRNA central domain where it helps coordinate assembly of the platform of the 30S subunit. In Acidithiobacillus ferrooxidans (strain ATCC 23270 / DSM 14882 / CIP 104768 / NCIMB 8455) (Ferrobacillus ferrooxidans (strain ATCC 23270)), this protein is Small ribosomal subunit protein uS8.